The primary structure comprises 133 residues: Acyl-CoA thioesterase YbgC (133 aa).

The active site involves D11.

This sequence belongs to the 4-hydroxybenzoyl-CoA thioesterase family. In terms of assembly, homotetramer. May interact with CagA.

Functionally, thioesterase that may be involved in phospholipid metabolism. Displays acyl-CoA thioesterase activity with lauroyl-CoA (C12:0), myristoyl-CoA (C14:0), palmitoyl-CoA (C16:0), stearoyl-CoA (C18:0) and benzoyl-CoA, catalyzing the hydrolysis of the thioester bond. Has low activity with butyryl-CoA and octanoyl-CoA. The sequence is that of Acyl-CoA thioesterase YbgC (ybgC) from Helicobacter pylori (strain ATCC 700392 / 26695) (Campylobacter pylori).